The following is a 307-amino-acid chain: Elongation factor Ts (307 aa).

An involved in Mg(2+) ion dislocation from EF-Tu region spans residues threonine 79 to valine 82.

This sequence belongs to the EF-Ts family.

The protein localises to the cytoplasm. Its function is as follows. Associates with the EF-Tu.GDP complex and induces the exchange of GDP to GTP. It remains bound to the aminoacyl-tRNA.EF-Tu.GTP complex up to the GTP hydrolysis stage on the ribosome. This is Elongation factor Ts from Sinorhizobium medicae (strain WSM419) (Ensifer medicae).